The chain runs to 286 residues: 2-dehydro-3-deoxyphosphooctonate aldolase (286 aa).

The protein belongs to the KdsA family.

The protein localises to the cytoplasm. It carries out the reaction D-arabinose 5-phosphate + phosphoenolpyruvate + H2O = 3-deoxy-alpha-D-manno-2-octulosonate-8-phosphate + phosphate. It participates in carbohydrate biosynthesis; 3-deoxy-D-manno-octulosonate biosynthesis; 3-deoxy-D-manno-octulosonate from D-ribulose 5-phosphate: step 2/3. The protein operates within bacterial outer membrane biogenesis; lipopolysaccharide biosynthesis. In Haemophilus ducreyi (strain 35000HP / ATCC 700724), this protein is 2-dehydro-3-deoxyphosphooctonate aldolase.